The following is a 736-amino-acid chain: 1,4-alpha-glucan branching enzyme GlgB (736 aa).

Catalysis depends on D417, which acts as the Nucleophile. E470 functions as the Proton donor in the catalytic mechanism.

It belongs to the glycosyl hydrolase 13 family. GlgB subfamily. As to quaternary structure, monomer.

It carries out the reaction Transfers a segment of a (1-&gt;4)-alpha-D-glucan chain to a primary hydroxy group in a similar glucan chain.. The protein operates within glycan biosynthesis; glycogen biosynthesis. Its function is as follows. Catalyzes the formation of the alpha-1,6-glucosidic linkages in glycogen by scission of a 1,4-alpha-linked oligosaccharide from growing alpha-1,4-glucan chains and the subsequent attachment of the oligosaccharide to the alpha-1,6 position. This is 1,4-alpha-glucan branching enzyme GlgB from Pseudomonas putida (strain ATCC 47054 / DSM 6125 / CFBP 8728 / NCIMB 11950 / KT2440).